The chain runs to 589 residues: V-type ATP synthase alpha chain (589 aa).

232 to 239 is a binding site for ATP; sequence GPFGSGKT.

It belongs to the ATPase alpha/beta chains family.

It catalyses the reaction ATP + H2O + 4 H(+)(in) = ADP + phosphate + 5 H(+)(out). Its function is as follows. Produces ATP from ADP in the presence of a proton gradient across the membrane. The V-type alpha chain is a catalytic subunit. The sequence is that of V-type ATP synthase alpha chain from Acetivibrio thermocellus (strain ATCC 27405 / DSM 1237 / JCM 9322 / NBRC 103400 / NCIMB 10682 / NRRL B-4536 / VPI 7372) (Clostridium thermocellum).